Reading from the N-terminus, the 347-residue chain is Lipoyl synthase (347 aa).

7 residues coordinate [4Fe-4S] cluster: Cys-77, Cys-82, Cys-88, Cys-103, Cys-107, Cys-110, and Ser-317. One can recognise a Radical SAM core domain in the interval Phe-89 to Phe-306.

The protein belongs to the radical SAM superfamily. Lipoyl synthase family. [4Fe-4S] cluster is required as a cofactor.

It localises to the cytoplasm. The catalysed reaction is [[Fe-S] cluster scaffold protein carrying a second [4Fe-4S](2+) cluster] + N(6)-octanoyl-L-lysyl-[protein] + 2 oxidized [2Fe-2S]-[ferredoxin] + 2 S-adenosyl-L-methionine + 4 H(+) = [[Fe-S] cluster scaffold protein] + N(6)-[(R)-dihydrolipoyl]-L-lysyl-[protein] + 4 Fe(3+) + 2 hydrogen sulfide + 2 5'-deoxyadenosine + 2 L-methionine + 2 reduced [2Fe-2S]-[ferredoxin]. The protein operates within protein modification; protein lipoylation via endogenous pathway; protein N(6)-(lipoyl)lysine from octanoyl-[acyl-carrier-protein]: step 2/2. Catalyzes the radical-mediated insertion of two sulfur atoms into the C-6 and C-8 positions of the octanoyl moiety bound to the lipoyl domains of lipoate-dependent enzymes, thereby converting the octanoylated domains into lipoylated derivatives. The chain is Lipoyl synthase from Psychrobacter arcticus (strain DSM 17307 / VKM B-2377 / 273-4).